We begin with the raw amino-acid sequence, 1377 residues long: MAQSYVGQKRIRRYYGKIREVLEMPNLIEVQKSSYDLFLKSGDGPKAADGEGIQGVFQSVFPIKDFNETAVLEFVKYELEKPKYDVDECQQRDMTYAAPLKVTLRLIVFDVDETTGARSVKDIKEQDVYMGDMPLMTANGTFIVNGTERVIVSQMHRSPGVFFDHDKGKTHSSGKLLFACRIIPYRGSWLDFEFDAKDIVFARIDRRRKLPVTTLLYALGMDQEGIMDAYYETVNFKHQKNRGWVTRFFPERVRGTRPTYDLVDAATGEVILKAGEKATPRMVKKWIDEAQITELLVPFDHIVGRYVAQDIINEETGEIWVEAGDELTMEYDRDGEVKGGTLKLLLDQGITDIPVLDIDNVNVGPYIRNTMAADKNMGRDTALMDIYRVMRPGEPPTVEAASNLFDTLFFDSERYDLSAVGRVKMNMRLDLGKPDTQRTLDRDDIIACIKALTELRDGKGEIDDIDHLGNRRVRSVGELMENQYRVGLLRMERAIKERMSSVEIDTIMPQDLINAKPAAAAVREFFGSSQLSQFMDQTNPLSEVTHKRRLSALGPGGLTRERAGFEVRDVHPTHYGRMCPIETPEGQNIGLINSLATFARVNKYGFIETPYRKVVEGAVTDDVVYMSATEEMRHTVAQANAQLDEEGRFVSDLISSRKAGEFMLNPPDAIDLIDVSPKQLVSVAASLIPFLENDDANRALMGSNMQRQAVPLLQSDAPFVGTGIEAVVARDSGAAIMARRAGVIDQVDATRIVVRATEMLEPGEPGVDIYRLRKFKRSNQSSCINQRPLVKVGDVVHRGEVVADGPCTDMGELALGRNVIVAFMPWNGYNYEDSILISERILRDDVYTSIHIEEYEVAARDTKLGPEEITRDIPNVGEEALRNLDEAGIVYIGAEVQPGDILVGKITPKGESPMTPEEKLLRAIFGEKASDVRDTSLRLPPGAYGTIVEVRVFNRHGVDKDERALQIEREEVERLARDRDDELAILERNIYSRLRTLIMGKTAVKGPKGIRAGSEINEDLLSTLSRGQWWQLALGEEADAKEVEALHEQFEAQKRALDHRFEDKVEKVRRGDDLPPGVMKMVKVFVAVKRKLQPGDKMAGRHGNKGVISKVVPIEDMPFLADGTHVDLVLNPLGVPSRMNVGQILETHMGWAARGLGIKIDEALQDYRRSGDLTPVKEAMRLAYGDETYEGAFGDREDEDLVEMAGRVTKGVPIATPVFDGAKEPDVNDALRRAGFDQSGQSIVFDGRTGEQFARPVTVGVKYMLKLHHLVDDKLHARSTGPYSLVTQQPLGGKAQFGGQRLGEMEVWALEAYGAAYTLQEMLTVKSDDVAGRTKMYESIVKGEDNFEAGVPESFNVLVKEVRGLGLNMELLDADEE.

The protein belongs to the RNA polymerase beta chain family. As to quaternary structure, the RNAP catalytic core consists of 2 alpha, 1 beta, 1 beta' and 1 omega subunit. When a sigma factor is associated with the core the holoenzyme is formed, which can initiate transcription.

The enzyme catalyses RNA(n) + a ribonucleoside 5'-triphosphate = RNA(n+1) + diphosphate. DNA-dependent RNA polymerase catalyzes the transcription of DNA into RNA using the four ribonucleoside triphosphates as substrates. The chain is DNA-directed RNA polymerase subunit beta from Cereibacter sphaeroides (strain ATCC 17029 / ATH 2.4.9) (Rhodobacter sphaeroides).